A 592-amino-acid polypeptide reads, in one-letter code: Glycosyltransferase 25 family member (592 aa).

The N-terminal stretch at 1–13 (MLALLLTTTIVSG) is a signal peptide. 2 N-linked (GlcNAc...) asparagine glycosylation sites follow: Asn-249 and Asn-510. 2 stretches are compositionally biased toward basic and acidic residues: residues 552 to 563 (RIQEPKKGDKEQ) and 579 to 592 (GEHD…RSEL). The tract at residues 552–592 (RIQEPKKGDKEQLPNAPALLSESGIGQGEHDLETKNRRSEL) is disordered. The short motif at 589-592 (RSEL) is the Prevents secretion from ER element.

It belongs to the glycosyltransferase 25 family.

Its subcellular location is the endoplasmic reticulum lumen. The chain is Glycosyltransferase 25 family member from Anopheles gambiae (African malaria mosquito).